We begin with the raw amino-acid sequence, 821 residues long: Kinetochore protein SLK19 (821 aa).

Disordered stretches follow at residues 1–52 and 99–153; these read MNEV…SQFV and FDDK…NDKE. At T7 the chain carries Phosphothreonine; by CDC28. The span at 15 to 51 shows a compositional bias: polar residues; that stretch reads QAQQREQNSENCSQERNPRTFNSEPDSSFNSPGSSQF. Composition is skewed to basic and acidic residues over residues 99–122 and 136–153; these read FDDKKSDSGTNDDKGGASTSDKHV and SSEKRSDKNVDVDENDKE. Residues S188 and S189 each carry the phosphoserine modification. S201 carries the post-translational modification Phosphoserine; by CDC28. S216 carries the phosphoserine modification. A Phosphothreonine modification is found at T273. Disordered regions lie at residues 274–298 and 699–720; these read PLYETSARESNSNEEGRNDYDDDNQ and EQNNNNNNSVTLSNDQKDRDDE. S283 bears the Phosphoserine mark. The stretch at 310-821 forms a coiled coil; the sequence is AKRNEELTDQ…LLKLLENEKK (512 aa).

Cleaved by ESP1 at the onset of anaphase. Post-translationally, phosphorylated by CDC5/Polo-like kinase at the onset of anaphase. Phosphorylation takes places at proximity to cleavage sites and is required for an efficient cleavage by ESP1. Phosphorylated also by CDC28.

The protein localises to the chromosome. It localises to the centromere. The protein resides in the kinetochore. Its subcellular location is the cytoplasm. It is found in the cytoskeleton. The protein localises to the microtubule organizing center. It localises to the spindle pole body. In terms of biological role, has a role in spindle assembly and stability. Required to ensure a timely exit form mitosis. Essential to maintain pre-anaphase spindle polarity. Associates to the plus ends of the microtubules at the kinetochore and spindle midzone. A component of the FEAR (CDC14 Early Anaphase Release) network which promotes CDC14 release from the nucleolus during early anaphase. Required for proper chromosome segregation during meiosis I where it prevents premature sister chromatid separation. This chain is Kinetochore protein SLK19 (SLK19), found in Saccharomyces cerevisiae (strain ATCC 204508 / S288c) (Baker's yeast).